Consider the following 150-residue polypeptide: D-aminoacyl-tRNA deacylase (150 aa).

The short motif at 138-139 (GP) is the Gly-cisPro motif, important for rejection of L-amino acids element.

Belongs to the DTD family. As to quaternary structure, homodimer.

Its subcellular location is the cytoplasm. The enzyme catalyses glycyl-tRNA(Ala) + H2O = tRNA(Ala) + glycine + H(+). The catalysed reaction is a D-aminoacyl-tRNA + H2O = a tRNA + a D-alpha-amino acid + H(+). Its function is as follows. An aminoacyl-tRNA editing enzyme that deacylates mischarged D-aminoacyl-tRNAs. Also deacylates mischarged glycyl-tRNA(Ala), protecting cells against glycine mischarging by AlaRS. Acts via tRNA-based rather than protein-based catalysis; rejects L-amino acids rather than detecting D-amino acids in the active site. By recycling D-aminoacyl-tRNA to D-amino acids and free tRNA molecules, this enzyme counteracts the toxicity associated with the formation of D-aminoacyl-tRNA entities in vivo and helps enforce protein L-homochirality. This is D-aminoacyl-tRNA deacylase from Porphyromonas gingivalis (strain ATCC 33277 / DSM 20709 / CIP 103683 / JCM 12257 / NCTC 11834 / 2561).